Consider the following 1471-residue polypeptide: Myosin-51 (1471 aa).

Residues 7 to 61 (SVGSECWVSNNNGHWDAARLIEIKDNGGGKVVATVAKSSGVLETVNYQQLQNRNI) form the Myosin N-terminal SH3-like domain. A Myosin motor domain is found at 65–749 (ESPSDLTNLP…VIGNFEEAHR (685 aa)). 159–166 (GESGAGKT) is an ATP binding site. Residues 628–650 (LSQLMTTVSSTNVHYIRCIKPNE) are actin-binding. 6 consecutive IQ domains span residues 753–773 (SKST…KEYQ), 776–796 (VKFI…QRFE), 801–821 (ERAA…KRYL), 824–844 (IKCA…SRYI), 849–869 (ESSA…KTFR), and 872–892 (KKSV…RYLR). Residues 909 to 952 (KNLQASITEVSKQLKSNSKKVTVLRNKLNILNNSLSKWKCLIKK) adopt a coiled-coil conformation. The 247-residue stretch at 1171 to 1417 (EKPLQAVLYW…SKAVEALSCK (247 aa)) folds into the Dilute domain.

It belongs to the TRAFAC class myosin-kinesin ATPase superfamily. Myosin family.

Its subcellular location is the cytoplasm. Involved in cytokinesis. This Schizosaccharomyces pombe (strain 972 / ATCC 24843) (Fission yeast) protein is Myosin-51 (myo51).